A 126-amino-acid polypeptide reads, in one-letter code: Protein mmf2, mitochondrial (126 aa).

Belongs to the RutC family.

It is found in the mitochondrion. Its subcellular location is the cytoplasm. Plays a role in the maintenance of mitochondrial DNA. The polypeptide is Protein mmf2, mitochondrial (mmf2) (Schizosaccharomyces pombe (strain 972 / ATCC 24843) (Fission yeast)).